The sequence spans 334 residues: ADP-L-glycero-D-manno-heptose-6-epimerase (334 aa).

Residues 11–12, 32–33, K39, K54, 77–81, and N94 contribute to the NADP(+) site; these read FI, DN, and QGACS. Y141 (proton acceptor) is an active-site residue. K145 is an NADP(+) binding site. Residue N171 coordinates substrate. Positions 172 and 180 each coordinate NADP(+). Residue K180 is the Proton acceptor of the active site. Substrate is bound by residues R182, H189, 203-206, R216, and Y295; that span reads FGSN.

It belongs to the NAD(P)-dependent epimerase/dehydratase family. HldD subfamily. As to quaternary structure, homopentamer. It depends on NADP(+) as a cofactor.

The enzyme catalyses ADP-D-glycero-beta-D-manno-heptose = ADP-L-glycero-beta-D-manno-heptose. It functions in the pathway nucleotide-sugar biosynthesis; ADP-L-glycero-beta-D-manno-heptose biosynthesis; ADP-L-glycero-beta-D-manno-heptose from D-glycero-beta-D-manno-heptose 7-phosphate: step 4/4. In terms of biological role, catalyzes the interconversion between ADP-D-glycero-beta-D-manno-heptose and ADP-L-glycero-beta-D-manno-heptose via an epimerization at carbon 6 of the heptose. This Neisseria meningitidis serogroup C / serotype 2a (strain ATCC 700532 / DSM 15464 / FAM18) protein is ADP-L-glycero-D-manno-heptose-6-epimerase.